The chain runs to 379 residues: ATP phosphoribosyltransferase regulatory subunit (379 aa).

It belongs to the class-II aminoacyl-tRNA synthetase family. HisZ subfamily. In terms of assembly, heteromultimer composed of HisG and HisZ subunits.

It is found in the cytoplasm. It functions in the pathway amino-acid biosynthesis; L-histidine biosynthesis; L-histidine from 5-phospho-alpha-D-ribose 1-diphosphate: step 1/9. Functionally, required for the first step of histidine biosynthesis. May allow the feedback regulation of ATP phosphoribosyltransferase activity by histidine. In Gluconobacter oxydans (strain 621H) (Gluconobacter suboxydans), this protein is ATP phosphoribosyltransferase regulatory subunit.